The following is a 429-amino-acid chain: Ribosomal RNA small subunit methyltransferase B (429 aa).

Residues 254 to 260 (CAAPGGK), Asp-277, Asp-303, and Asp-322 contribute to the S-adenosyl-L-methionine site. Catalysis depends on Cys-375, which acts as the Nucleophile.

Belongs to the class I-like SAM-binding methyltransferase superfamily. RsmB/NOP family.

It is found in the cytoplasm. It catalyses the reaction cytidine(967) in 16S rRNA + S-adenosyl-L-methionine = 5-methylcytidine(967) in 16S rRNA + S-adenosyl-L-homocysteine + H(+). In terms of biological role, specifically methylates the cytosine at position 967 (m5C967) of 16S rRNA. In Cronobacter sakazakii (strain ATCC BAA-894) (Enterobacter sakazakii), this protein is Ribosomal RNA small subunit methyltransferase B.